The primary structure comprises 709 residues: Phosphoribosylformylglycinamidine synthase subunit PurL (709 aa).

Residue histidine 36 is part of the active site. ATP contacts are provided by tyrosine 39 and lysine 80. Glutamate 82 serves as a coordination point for Mg(2+). Substrate contacts are provided by residues serine 83–histidine 86 and arginine 105. Histidine 84 acts as the Proton acceptor in catalysis. Aspartate 106 lines the Mg(2+) pocket. Substrate is bound at residue glutamine 226. Aspartate 252 contacts Mg(2+). Glutamate 294–glutamine 296 contacts substrate. ATP contacts are provided by aspartate 470 and glycine 507. Serine 510 serves as a coordination point for substrate.

This sequence belongs to the FGAMS family. Monomer. Part of the FGAM synthase complex composed of 1 PurL, 1 PurQ and 2 PurS subunits.

It localises to the cytoplasm. It catalyses the reaction N(2)-formyl-N(1)-(5-phospho-beta-D-ribosyl)glycinamide + L-glutamine + ATP + H2O = 2-formamido-N(1)-(5-O-phospho-beta-D-ribosyl)acetamidine + L-glutamate + ADP + phosphate + H(+). It functions in the pathway purine metabolism; IMP biosynthesis via de novo pathway; 5-amino-1-(5-phospho-D-ribosyl)imidazole from N(2)-formyl-N(1)-(5-phospho-D-ribosyl)glycinamide: step 1/2. Its function is as follows. Part of the phosphoribosylformylglycinamidine synthase complex involved in the purines biosynthetic pathway. Catalyzes the ATP-dependent conversion of formylglycinamide ribonucleotide (FGAR) and glutamine to yield formylglycinamidine ribonucleotide (FGAM) and glutamate. The FGAM synthase complex is composed of three subunits. PurQ produces an ammonia molecule by converting glutamine to glutamate. PurL transfers the ammonia molecule to FGAR to form FGAM in an ATP-dependent manner. PurS interacts with PurQ and PurL and is thought to assist in the transfer of the ammonia molecule from PurQ to PurL. In Saccharolobus islandicus (strain Y.N.15.51 / Yellowstone #2) (Sulfolobus islandicus), this protein is Phosphoribosylformylglycinamidine synthase subunit PurL.